A 641-amino-acid chain; its full sequence is Soluble starch synthase 1, chloroplastic/amyloplastic (641 aa).

Lys-145 provides a ligand contact to ADP-alpha-D-glucose.

The protein belongs to the glycosyltransferase 1 family. Bacterial/plant glycogen synthase subfamily. High expression in leaves and very low in tubers.

The protein localises to the plastid. It localises to the chloroplast. It is found in the amyloplast. It carries out the reaction [(1-&gt;4)-alpha-D-glucosyl](n) + ADP-alpha-D-glucose = [(1-&gt;4)-alpha-D-glucosyl](n+1) + ADP + H(+). The protein operates within glycan biosynthesis; starch biosynthesis. In terms of biological role, plays a minor role in starch synthesis in storage organs (tubers), but may contribute to the deposition of transient starch in chloroplasts of leaves. The sequence is that of Soluble starch synthase 1, chloroplastic/amyloplastic from Solanum tuberosum (Potato).